The sequence spans 671 residues: Anaphase-promoting complex subunit cut9 (671 aa).

The segment at 1 to 24 (MVVKRTQTDSRMQSTPGNHNHPDA) is disordered. 14 TPR repeats span residues 83–114 (REDY…LDIT), 117–142 (PNDA…LLTK), 150–173 (SACR…LNLL), 198–229 (LEAS…ALMV), 234–257 (YEAF…LVLK), 268–296 (AAFL…DYLS), 306–334 (DLLL…ILEI), 341–368 (VYPL…LVDR), 373–402 (AVTW…SSTM), 407–435 (GPAW…TAAR), 442–470 (LPYL…SYAL), 475–507 (PLLL…LVKK), 513–545 (KPWA…GLLL), and 550–579 (ANVH…SLAI). Positions 622 to 643 (NLNTSDKSMSMEDQSGKVTESV) are disordered.

The APC/C is composed of at least 13 subunits: apc1, apc2, nuc2, apc4, apc5, cut9, apc8, apc10, apc11, hcn1, apc13, apc14 and apc15. Homodimer. Interacts directly with nuc2 and hcn1. Post-translationally, phosphorylated.

It localises to the nucleus. Its function is as follows. Component of the anaphase-promoting complex/cyclosome (APC/C), a cell cycle-regulated E3 ubiquitin-protein ligase complex that controls progression through mitosis and the G1 phase of the cell cycle. The APC/C is thought to confer substrate specificity and, in the presence of ubiquitin-conjugating E2 enzymes, it catalyzes the formation of protein-ubiquitin conjugates that are subsequently degraded by the 26S proteasome. May play a pivotal role in the control of anaphase. This is Anaphase-promoting complex subunit cut9 (cut9) from Schizosaccharomyces pombe (strain 972 / ATCC 24843) (Fission yeast).